A 366-amino-acid polypeptide reads, in one-letter code: 3-dehydroquinate synthase (366 aa).

Residues 71–76, 105–109, 129–130, K142, K151, and 169–172 each bind NAD(+); these read DGEQYK, GVIGD, TT, and CLKT. Zn(2+)-binding residues include E184, H247, and H264.

Belongs to the sugar phosphate cyclases superfamily. Dehydroquinate synthase family. The cofactor is Co(2+). Zn(2+) is required as a cofactor. It depends on NAD(+) as a cofactor.

The protein resides in the cytoplasm. The enzyme catalyses 7-phospho-2-dehydro-3-deoxy-D-arabino-heptonate = 3-dehydroquinate + phosphate. It participates in metabolic intermediate biosynthesis; chorismate biosynthesis; chorismate from D-erythrose 4-phosphate and phosphoenolpyruvate: step 2/7. In terms of biological role, catalyzes the conversion of 3-deoxy-D-arabino-heptulosonate 7-phosphate (DAHP) to dehydroquinate (DHQ). The chain is 3-dehydroquinate synthase from Serratia proteamaculans (strain 568).